Reading from the N-terminus, the 397-residue chain is Trans-2-enoyl-CoA reductase [NADH] (397 aa).

NAD(+) is bound by residues 53-58 (GCSNGY), 79-80 (FE), 116-117 (DA), and 144-145 (LA). Substrate is bound at residue tyrosine 230. Residue tyrosine 240 is the Proton donor of the active site. Residues lysine 249 and 276 to 278 (LVT) each bind NAD(+).

This sequence belongs to the TER reductase family. Monomer.

The catalysed reaction is a 2,3-saturated acyl-CoA + NAD(+) = a (2E)-enoyl-CoA + NADH + H(+). It participates in lipid metabolism; fatty acid biosynthesis. Its activity is regulated as follows. Inhibited by lauroyl-CoA. Involved in the fatty acid synthesis (FAS II). Catalyzes the reduction of the carbon-carbon double bond of crotonyl-CoA to yield butyryl-CoA. In vitro it can also use hexenoyl-CoA and dodecenoyl-CoA as substrates. The chain is Trans-2-enoyl-CoA reductase [NADH] from Treponema denticola (strain ATCC 35405 / DSM 14222 / CIP 103919 / JCM 8153 / KCTC 15104).